Consider the following 168-residue polypeptide: UPF0134 protein MPN_524 (168 aa).

The protein belongs to the UPF0134 family.

The sequence is that of UPF0134 protein MPN_524 from Mycoplasma pneumoniae (strain ATCC 29342 / M129 / Subtype 1) (Mycoplasmoides pneumoniae).